Consider the following 296-residue polypeptide: Cytidine deaminase (296 aa).

CMP/dCMP-type deaminase domains follow at residues 47–167 and 186–296; these read ELNE…FGPS and DSND…VEPE. Residue 88–90 coordinates substrate; the sequence is NIE. His101 contributes to the Zn(2+) binding site. Residue Glu103 is the Proton donor of the active site. Zn(2+) is bound by residues Cys128 and Cys131.

The protein belongs to the cytidine and deoxycytidylate deaminase family. In terms of assembly, homodimer. Zn(2+) is required as a cofactor.

It carries out the reaction cytidine + H2O + H(+) = uridine + NH4(+). The catalysed reaction is 2'-deoxycytidine + H2O + H(+) = 2'-deoxyuridine + NH4(+). Its function is as follows. This enzyme scavenges exogenous and endogenous cytidine and 2'-deoxycytidine for UMP synthesis. The chain is Cytidine deaminase from Shewanella halifaxensis (strain HAW-EB4).